A 77-amino-acid chain; its full sequence is Exodeoxyribonuclease 7 small subunit (77 aa).

The protein belongs to the XseB family. Heterooligomer composed of large and small subunits.

The protein resides in the cytoplasm. The catalysed reaction is Exonucleolytic cleavage in either 5'- to 3'- or 3'- to 5'-direction to yield nucleoside 5'-phosphates.. Functionally, bidirectionally degrades single-stranded DNA into large acid-insoluble oligonucleotides, which are then degraded further into small acid-soluble oligonucleotides. The chain is Exodeoxyribonuclease 7 small subunit from Alkaliphilus oremlandii (strain OhILAs) (Clostridium oremlandii (strain OhILAs)).